A 214-amino-acid polypeptide reads, in one-letter code: Ion-translocating oxidoreductase complex subunit G (214 aa).

The chain crosses the membrane as a helical span at residues 13–33 (ALLLGLFALVGVGLVALVQQF). The residue at position 180 (Thr-180) is an FMN phosphoryl threonine.

This sequence belongs to the RnfG family. The complex is composed of six subunits: RnfA, RnfB, RnfC, RnfD, RnfE and RnfG. It depends on FMN as a cofactor.

The protein resides in the cell inner membrane. Its function is as follows. Part of a membrane-bound complex that couples electron transfer with translocation of ions across the membrane. In Pseudomonas aeruginosa (strain UCBPP-PA14), this protein is Ion-translocating oxidoreductase complex subunit G.